Consider the following 81-residue polypeptide: Photosystem I iron-sulfur center (81 aa).

2 4Fe-4S ferredoxin-type domains span residues 2–31 (AHAV…MIPW) and 39–68 (IASA…VRVY). 8 residues coordinate [4Fe-4S] cluster: C11, C14, C17, C21, C48, C51, C54, and C58.

In terms of assembly, the eukaryotic PSI reaction center is composed of at least 11 subunits. Requires [4Fe-4S] cluster as cofactor.

Its subcellular location is the plastid. It is found in the chloroplast thylakoid membrane. It catalyses the reaction reduced [plastocyanin] + hnu + oxidized [2Fe-2S]-[ferredoxin] = oxidized [plastocyanin] + reduced [2Fe-2S]-[ferredoxin]. In terms of biological role, apoprotein for the two 4Fe-4S centers FA and FB of photosystem I (PSI); essential for photochemical activity. FB is the terminal electron acceptor of PSI, donating electrons to ferredoxin. The C-terminus interacts with PsaA/B/D and helps assemble the protein into the PSI complex. Required for binding of PsaD and PsaE to PSI. PSI is a plastocyanin-ferredoxin oxidoreductase, converting photonic excitation into a charge separation, which transfers an electron from the donor P700 chlorophyll pair to the spectroscopically characterized acceptors A0, A1, FX, FA and FB in turn. This chain is Photosystem I iron-sulfur center, found in Marchantia polymorpha (Common liverwort).